The sequence spans 330 residues: ADP-L-glycero-D-manno-heptose-6-epimerase (330 aa).

NADP(+)-binding positions include 10-11, 31-32, K38, K53, 74-78, and N91; these read FI, DD, and QGACS. The Proton acceptor role is filled by Y138. K142 is a binding site for NADP(+). N167 serves as a coordination point for substrate. Positions 168 and 176 each coordinate NADP(+). The active-site Proton acceptor is the K176. Substrate is bound by residues R178, H185, 199–202, R212, and Y291; that span reads FAGW.

The protein belongs to the NAD(P)-dependent epimerase/dehydratase family. HldD subfamily. As to quaternary structure, homopentamer. The cofactor is NADP(+).

It catalyses the reaction ADP-D-glycero-beta-D-manno-heptose = ADP-L-glycero-beta-D-manno-heptose. The protein operates within nucleotide-sugar biosynthesis; ADP-L-glycero-beta-D-manno-heptose biosynthesis; ADP-L-glycero-beta-D-manno-heptose from D-glycero-beta-D-manno-heptose 7-phosphate: step 4/4. Catalyzes the interconversion between ADP-D-glycero-beta-D-manno-heptose and ADP-L-glycero-beta-D-manno-heptose via an epimerization at carbon 6 of the heptose. This is ADP-L-glycero-D-manno-heptose-6-epimerase from Bordetella petrii (strain ATCC BAA-461 / DSM 12804 / CCUG 43448).